The primary structure comprises 179 residues: Protein PLASTID REDOX INSENSITIVE 2, chloroplastic (179 aa).

The transit peptide at 1–69 (MASMHEALFS…SLSRRGFVCR (69 aa)) directs the protein to the chloroplast.

Binds DNA when in complex with CSP41b.

Its subcellular location is the plastid. It is found in the chloroplast stroma. The protein resides in the chloroplast nucleoid. Functionally, involved in redox-mediated retrograde signaling to synchronize the expression of photosynthetic genes from both the nuclear and plastidic genomes, especially in excess light conditions. Required for full expression of genes transcribed by the plastid-encoded RNA polymerase (PEP). Essential for embryo development. This Arabidopsis thaliana (Mouse-ear cress) protein is Protein PLASTID REDOX INSENSITIVE 2, chloroplastic.